Here is a 503-residue protein sequence, read N- to C-terminus: MSLFSFPISTELLPWLLLLLIPPLLIFFLLRSPKNLPPGPPRLPILGNIHQLGSLPHRSLRDLSLKYGPVITVYLGSVRTVVVHSPETAEEVLKLHDSECCTRPKLSITKSFFYDGLGLGFTKWGDYYRDVRKLCVLELFSVKRANSFRNIREEELSRLVNSFSDSASSGSSVDLTANLAKFVASFTCRMAFGLSFQGSGMDNETFLELFTEANRVIGKFAAADIFPGFGWILDRISGLDSSRRKSFQDLDTFYQKAIVDHREKKKTEDREDLIDVLLKLQSQETKLGSSRITDTHIRAIIMDLFVAGVDTSVITLDWTMAELSRHPRVMKKVQAEIREHVGDKGIVTYDDLEALVYMKMVIKETWRLHAPSPILIPREAMTNFKIKGYDIYPGTRIHVNAWAIGRNPDVWKDPDEFIPERFVDSNVETKGTSFELLPFGSGRRGCPAMYVGLSTVEYTLANLLYHFDWKATEEVSVEEAPGLTSHRKHPLHLVPVNVINRKL.

Residues 10–30 (TELLPWLLLLLIPPLLIFFLL) form a helical membrane-spanning segment. C446 is a binding site for heme.

This sequence belongs to the cytochrome P450 family. Heme is required as a cofactor.

The protein localises to the membrane. This is Cytochrome P450 71B6 (CYP71B6) from Arabidopsis thaliana (Mouse-ear cress).